An 836-amino-acid polypeptide reads, in one-letter code: uncharacterized protein (836 aa).

Disordered regions lie at residues 1–25 (MDST…NEEE), 692–718 (DSRS…NNQR), and 789–836 (ESSG…GYAS). 2 stretches are compositionally biased toward polar residues: residues 789–799 (ESSGINVSNTR) and 825–836 (IDSSSAQNGYAS).

The protein resides in the nucleus. This is an uncharacterized protein from Schizosaccharomyces pombe (strain 972 / ATCC 24843) (Fission yeast).